A 251-amino-acid polypeptide reads, in one-letter code: Octanoyltransferase (251 aa).

The region spanning 29-251 (AATPNSLWIC…GQKLSSYLAP (223 aa)) is the BPL/LPL catalytic domain. 68 to 75 (RGGQVTYH) is a substrate binding site. The segment at 137–174 (ARLRPSPQPSPKGRGSSTPVLLPPLPGEGGGGGGPDPD) is disordered. Substrate contacts are provided by residues 184 to 186 (ALG) and 197 to 199 (GVA). Cys215 serves as the catalytic Acyl-thioester intermediate.

The protein belongs to the LipB family.

The protein resides in the cytoplasm. It carries out the reaction octanoyl-[ACP] + L-lysyl-[protein] = N(6)-octanoyl-L-lysyl-[protein] + holo-[ACP] + H(+). The protein operates within protein modification; protein lipoylation via endogenous pathway; protein N(6)-(lipoyl)lysine from octanoyl-[acyl-carrier-protein]: step 1/2. Its function is as follows. Catalyzes the transfer of endogenously produced octanoic acid from octanoyl-acyl-carrier-protein onto the lipoyl domains of lipoate-dependent enzymes. Lipoyl-ACP can also act as a substrate although octanoyl-ACP is likely to be the physiological substrate. The sequence is that of Octanoyltransferase from Polaromonas sp. (strain JS666 / ATCC BAA-500).